We begin with the raw amino-acid sequence, 195 residues long: UPF0314 protein RHECIAT_CH0004233 (195 aa).

Helical transmembrane passes span 15–35, 64–84, 127–147, and 150–170; these read FWFV…YLMG, WYTP…YLIL, GDSI…FFFA, and APVA…GYVI.

It belongs to the UPF0314 family.

It is found in the cell membrane. The polypeptide is UPF0314 protein RHECIAT_CH0004233 (Rhizobium etli (strain CIAT 652)).